A 225-amino-acid chain; its full sequence is Uracil-DNA glycosylase 1 (225 aa).

Asp-68 functions as the Proton acceptor in the catalytic mechanism.

The protein belongs to the uracil-DNA glycosylase (UDG) superfamily. UNG family.

The protein localises to the cytoplasm. It catalyses the reaction Hydrolyzes single-stranded DNA or mismatched double-stranded DNA and polynucleotides, releasing free uracil.. Excises uracil residues from the DNA which can arise as a result of misincorporation of dUMP residues by DNA polymerase or due to deamination of cytosine. This Streptomyces avermitilis (strain ATCC 31267 / DSM 46492 / JCM 5070 / NBRC 14893 / NCIMB 12804 / NRRL 8165 / MA-4680) protein is Uracil-DNA glycosylase 1 (ung1).